The chain runs to 626 residues: Ankyrin repeat domain-containing protein 55 (626 aa).

ANK repeat units lie at residues 25-54 (VDLA…SILE), 59-88 (EGCT…NINT), 92-124 (YGRT…IPDK), 125-156 (NGRL…EINH), 160-189 (EGMT…DPTL), 193-222 (DFKT…GPSI), 229-259 (SGKT…NLQA), 263-292 (DDRT…DSNL), and 296-325 (NEST…AEPA). Residues 354 to 372 (KEEQKAHQKDQSRARPKEE) are compositionally biased toward basic and acidic residues. Disordered stretches follow at residues 354–377 (KEEQ…TSEV), 455–491 (HAGL…SLEN), and 522–626 (QPGH…HDEN). Ser474 carries the phosphoserine modification. Basic and acidic residues predominate over residues 604–614 (QRGHDPPRAEE). Over residues 616–626 (GGSSSPTHDEN) the composition is skewed to polar residues.

The protein is Ankyrin repeat domain-containing protein 55 (Ankrd55) of Mus musculus (Mouse).